The chain runs to 422 residues: Testin (422 aa).

The 108-residue stretch at 92–199 folds into the PET domain; sequence MILTNPVPAK…GDVKLPGELE (108 aa). The tract at residues 198 to 224 is disordered; sequence LETKATDKNNVNSGDRSTSAAVGAMED. Residues 205–217 show a composition bias toward polar residues; it reads KNNVNSGDRSTSA. LIM zinc-binding domains lie at 234-297, 299-359, and 362-422; these read YSCY…CDSE, PRCA…KHAA, and QGCH…KMMS.

Belongs to the prickle / espinas / testin family.

The protein resides in the cytoplasm. It is found in the cell junction. Its subcellular location is the focal adhesion. Scaffold protein that may play a role in cell adhesion, cell spreading and in the reorganization of the actin cytoskeleton. May play a role in the regulation of cell proliferation. May inhibit cell growth. This Gallus gallus (Chicken) protein is Testin (TES).